An 872-amino-acid chain; its full sequence is Bifunctional uridylyltransferase/uridylyl-removing enzyme (872 aa).

Residues 1–332 are uridylyltransferase; the sequence is MALPNKVKKL…PKHHQPIIQE (332 aa). The tract at residues 333–691 is uridylyl-removing; sequence LDRNFERIGN…VSNKAMHGGT (359 aa). Residues 450-572 form the HD domain; it reads VDEHTHRLIN…VKTERQLDYL (123 aa). ACT domains lie at 692–773 and 799–872; these read QVFV…FKKN and LIEI…AETE.

This sequence belongs to the GlnD family. It depends on Mg(2+) as a cofactor.

It carries out the reaction [protein-PII]-L-tyrosine + UTP = [protein-PII]-uridylyl-L-tyrosine + diphosphate. The enzyme catalyses [protein-PII]-uridylyl-L-tyrosine + H2O = [protein-PII]-L-tyrosine + UMP + H(+). With respect to regulation, uridylyltransferase (UTase) activity is inhibited by glutamine, while glutamine activates uridylyl-removing (UR) activity. Modifies, by uridylylation and deuridylylation, the PII regulatory proteins (GlnB and homologs), in response to the nitrogen status of the cell that GlnD senses through the glutamine level. Under low glutamine levels, catalyzes the conversion of the PII proteins and UTP to PII-UMP and PPi, while under higher glutamine levels, GlnD hydrolyzes PII-UMP to PII and UMP (deuridylylation). Thus, controls uridylylation state and activity of the PII proteins, and plays an important role in the regulation of nitrogen assimilation and metabolism. In Pseudoalteromonas translucida (strain TAC 125), this protein is Bifunctional uridylyltransferase/uridylyl-removing enzyme.